The chain runs to 455 residues: Putative O-acetyltransferase SAT14 (455 aa).

This sequence belongs to the lysine N-acyltransferase MbtK family.

The protein operates within mycotoxin biosynthesis. Putative O-acetyltransferase; part of the satratoxin SC2 cluster involved in the biosynthesis of satratoxins, trichothecene mycotoxins that are associated with human food poisonings. Satratoxins are suggested to be made by products of multiple gene clusters (SC1, SC2 and SC3) that encode 21 proteins in all, including polyketide synthases, acetyltransferases, and other enzymes expected to modify the trichothecene skeleton. SC1 encodes 10 proteins, SAT1 to SAT10. The largest are SAT8, which encodes a putative polyketide synthase (PKS) with a conventional non-reducing architecture, and SAT10, a putative protein containing four ankyrin repeats and thus may be involved in protein scaffolding. The putative short-chain reductase SAT3 may assist the PKS in some capacity. SAT6 contains a secretory lipase domain and acts probably as a trichothecene esterase. SAT5 encodes a putative acetyltransferase, and so, with SAT6, may affect endogenous protection from toxicity. The probable transcription factor SAT9 may regulate the expression of the SC1 cluster. SC2 encodes proteins SAT11 to SAT16, the largest of which encodes the putative reducing PKS SAT13. SAT11 is a cytochrome P450 monooxygenase, while SAT14 and SAT16 are probable acetyltransferases. The SC2 cluster may be regulated by the transcription factor SAT15. SC3 is a small cluster that encodes 5 proteins, SAT17 to SAT21. SAT21 is a putative MFS-type transporter which may have a role in exporting secondary metabolites. The four other proteins putatively encoded in SC3 include the taurine hydroxylase-like protein SAT17, the O-methyltransferase SAT18, the acetyltransferase SAT19, and the Cys6-type zinc finger SAT20, the latter being probably involved in regulation of SC3 expression. The sequence is that of Putative O-acetyltransferase SAT14 from Stachybotrys chartarum (strain CBS 109288 / IBT 7711) (Toxic black mold).